Consider the following 363-residue polypeptide: Aminomethyltransferase (363 aa).

It belongs to the GcvT family. In terms of assembly, the glycine cleavage system is composed of four proteins: P, T, L and H.

It carries out the reaction N(6)-[(R)-S(8)-aminomethyldihydrolipoyl]-L-lysyl-[protein] + (6S)-5,6,7,8-tetrahydrofolate = N(6)-[(R)-dihydrolipoyl]-L-lysyl-[protein] + (6R)-5,10-methylene-5,6,7,8-tetrahydrofolate + NH4(+). Functionally, the glycine cleavage system catalyzes the degradation of glycine. This is Aminomethyltransferase from Dechloromonas aromatica (strain RCB).